Reading from the N-terminus, the 574-residue chain is Arginine--tRNA ligase (574 aa).

A 'HIGH' region motif is present at residues 126–136; it reads PNIAKRMHVGH.

Belongs to the class-I aminoacyl-tRNA synthetase family. In terms of assembly, monomer.

The protein localises to the cytoplasm. It carries out the reaction tRNA(Arg) + L-arginine + ATP = L-arginyl-tRNA(Arg) + AMP + diphosphate. In Chloroflexus aurantiacus (strain ATCC 29366 / DSM 635 / J-10-fl), this protein is Arginine--tRNA ligase.